A 405-amino-acid polypeptide reads, in one-letter code: Sialic acid transporter NanX (405 aa).

Residues 1 to 20 are Cytoplasmic-facing; that stretch reads MATAWYKQVNPPQRKALFSA. The chain crosses the membrane as a helical span at residues 21 to 41; that stretch reads WLGYVFDGFDFMMIFYILHII. Over 42-53 the chain is Periplasmic; sequence KADLGITDIQAT. A helical membrane pass occupies residues 54–74; that stretch reads LIGTVAFIARPIGGGFFGAMA. Residues 75–80 lie on the Cytoplasmic side of the membrane; the sequence is DKYGRK. Residues 81 to 101 form a helical membrane-spanning segment; the sequence is PMMMWAIFIYSVGTGLSGIAT. A topological domain (periplasmic) is located at residue Asn102. The chain crosses the membrane as a helical span at residues 103-123; it reads LYMLAVCRFIVGLGMSGEYAC. The Cytoplasmic portion of the chain corresponds to 124-139; the sequence is ASTYAVESWPKNLQSK. Residues 140 to 160 traverse the membrane as a helical segment; it reads ASAFLVSGFSVGNIIAAQIIP. Residues 161–164 lie on the Periplasmic side of the membrane; it reads QFAE. A helical transmembrane segment spans residues 165-185; it reads VYGWRNSFFIGLLPVLLVLWI. The Cytoplasmic segment spans residues 186–214; the sequence is RKSAPESQEWIEDKYKDKSTFLSVFRKPH. Residues 215–235 form a helical membrane-spanning segment; sequence LSISMIVFLVCFCLFGANWPI. Residues 236-250 are Periplasmic-facing; the sequence is NGLLPSYLADNGVNT. Residues 251 to 271 form a helical membrane-spanning segment; sequence VVISTLMTIAGLGTLTGTIFF. At 272–282 the chain is on the cytoplasmic side; it reads GFVGDKIGVKK. The helical transmembrane segment at 283–303 threads the bilayer; the sequence is AFVVGLITSFIFLCPLFFISV. The Periplasmic segment spans residues 304–307; it reads KNSS. Residues 308–328 form a helical membrane-spanning segment; sequence LIGLCLFGLMFTNLGIAGLVP. At 329–344 the chain is on the cytoplasmic side; sequence KFIYDYFPTKLRGLGT. A helical transmembrane segment spans residues 345–365; the sequence is GLIYNLGATGGMAAPVLATYI. The Periplasmic segment spans residues 366–371; it reads SGYYGL. Residues 372–392 form a helical membrane-spanning segment; sequence GVSLFIVTVAFSALLILLVGF. The Cytoplasmic segment spans residues 393 to 405; sequence DIPGKIYKLSVAK.

Belongs to the major facilitator superfamily. Sugar transporter (TC 2.A.1.1) family.

It localises to the cell inner membrane. In terms of biological role, probably transports across the inner membrane the two dehydrated forms of N-acetylneuraminate (Neu5Ac), 2,7-anhydro-N-acetylneuraminate (2,7-AN) and 2-deoxy-2,3-didehydro-N-acetylneuraminate (2,3-EN). This is Sialic acid transporter NanX from Escherichia coli (strain K12).